Consider the following 543-residue polypeptide: Cysteine/serine-rich nuclear protein 2 (543 aa).

Met-1 carries the post-translational modification N-acetylmethionine. 3 disordered regions span residues 1–51, 281–305, and 488–543; these read MDAF…SFTP, KRQV…LTGA, and DCNP…PLAV. Residues 31–40 are compositionally biased toward low complexity; it reads SSDSADSCDS. Composition is skewed to polar residues over residues 42-51 and 296-305; these read NPPTTASFTP and PTASCSLTGA.

It belongs to the AXUD1 family.

It is found in the nucleus. Binds to the consensus sequence 5'-AGAGTG-3' and has transcriptional activator activity. May play a role in apoptosis. This chain is Cysteine/serine-rich nuclear protein 2 (CSRNP2), found in Homo sapiens (Human).